The chain runs to 466 residues: ATP synthase subunit beta (466 aa).

155–162 (GGAGVGKT) is an ATP binding site.

It belongs to the ATPase alpha/beta chains family. F-type ATPases have 2 components, CF(1) - the catalytic core - and CF(0) - the membrane proton channel. CF(1) has five subunits: alpha(3), beta(3), gamma(1), delta(1), epsilon(1). CF(0) has three main subunits: a(1), b(2) and c(9-12). The alpha and beta chains form an alternating ring which encloses part of the gamma chain. CF(1) is attached to CF(0) by a central stalk formed by the gamma and epsilon chains, while a peripheral stalk is formed by the delta and b chains.

It localises to the cell inner membrane. It carries out the reaction ATP + H2O + 4 H(+)(in) = ADP + phosphate + 5 H(+)(out). Produces ATP from ADP in the presence of a proton gradient across the membrane. The catalytic sites are hosted primarily by the beta subunits. The chain is ATP synthase subunit beta from Bordetella pertussis (strain Tohama I / ATCC BAA-589 / NCTC 13251).